The sequence spans 490 residues: Probable glycine dehydrogenase (decarboxylating) subunit 2 (490 aa).

Lysine 273 bears the N6-(pyridoxal phosphate)lysine mark.

Belongs to the GcvP family. C-terminal subunit subfamily. The glycine cleavage system is composed of four proteins: P, T, L and H. In this organism, the P 'protein' is a heterodimer of two subunits. Pyridoxal 5'-phosphate is required as a cofactor.

The catalysed reaction is N(6)-[(R)-lipoyl]-L-lysyl-[glycine-cleavage complex H protein] + glycine + H(+) = N(6)-[(R)-S(8)-aminomethyldihydrolipoyl]-L-lysyl-[glycine-cleavage complex H protein] + CO2. In terms of biological role, the glycine cleavage system catalyzes the degradation of glycine. The P protein binds the alpha-amino group of glycine through its pyridoxal phosphate cofactor; CO(2) is released and the remaining methylamine moiety is then transferred to the lipoamide cofactor of the H protein. The sequence is that of Probable glycine dehydrogenase (decarboxylating) subunit 2 from Staphylococcus aureus (strain MRSA252).